A 404-amino-acid chain; its full sequence is Nuclear receptor subfamily 2 group F member 6 (404 aa).

Residues 1 to 15 (MAMVTGGWGGPGGDT) show a composition bias toward gly residues. The segment at 1-49 (MAMVTGGWGGPGGDTNGVDKAGGYPRAAEDDSASPPGAASDAEPGDEER) is disordered. Low complexity predominate over residues 33 to 42 (ASPPGAASDA). 2 positions are modified to phosphoserine: S34 and S40. The segment at residues 53–128 (QVDCVVCGDK…VGMRKEAVQR (76 aa)) is a DNA-binding region (nuclear receptor). The NR C4-type zinc finger occupies 56–76 (CVVCGDKSSGKHYGVFTCEGC). S83 is subject to Phosphoserine. The NR C4-type zinc finger occupies 92–116 (CRSNRDCQIDQHHRNQCQYCRLKKC). Residues 165-393 (PVSELIAQLL…TLIRDMLLSG (229 aa)) enclose the NR LBD domain. Residues 327–404 (LQEKAQVALT…TFNWPYGSGQ (78 aa)) form an important for dimerization region.

Belongs to the nuclear hormone receptor family. NR2 subfamily. As to quaternary structure, binds DNA as dimer; homodimer and heterodimer with NR2F2 and probably NR2F1. Interacts with THRB. Expressed in heart, placenta, liver, skeletal muscle, kidney and pancreas.

Its subcellular location is the nucleus. Its function is as follows. Transcription factor predominantly involved in transcriptional repression. Binds to promoter/enhancer response elements that contain the imperfect 5'-AGGTCA-3' direct or inverted repeats with various spacings which are also recognized by other nuclear hormone receptors. Involved in modulation of hormonal responses. Represses transcriptional activity of the lutropin-choriogonadotropic hormone receptor/LHCGR gene, the renin/REN gene and the oxytocin-neurophysin/OXT gene. Represses the triiodothyronine-dependent and -independent transcriptional activity of the thyroid hormone receptor gene in a cell type-specific manner. The corepressing function towards thyroid hormone receptor beta/THRB involves at least in part the inhibition of THRB binding to triiodothyronine response elements (TREs) by NR2F6. Inhibits NFATC transcription factor DNA binding and subsequently its transcriptional activity. Acts as transcriptional repressor of IL-17 expression in Th-17 differentiated CD4(+) T cells and may be involved in induction and/or maintenance of peripheral immunological tolerance and autoimmunity. Involved in development of forebrain circadian clock; is required early in the development of the locus coeruleus (LC). This chain is Nuclear receptor subfamily 2 group F member 6 (NR2F6), found in Homo sapiens (Human).